A 339-amino-acid chain; its full sequence is Lipoyl synthase (339 aa).

A disordered region spans residues 13-35; the sequence is RPKLDAPARPRHPEKAHRPDTAI. [4Fe-4S] cluster contacts are provided by Cys68, Cys73, Cys79, Cys94, Cys98, Cys101, and Ser307. The Radical SAM core domain occupies 80-296; the sequence is WEKRHATFMI…ETTAYAKGFL (217 aa).

It belongs to the radical SAM superfamily. Lipoyl synthase family. [4Fe-4S] cluster serves as cofactor.

Its subcellular location is the cytoplasm. It catalyses the reaction [[Fe-S] cluster scaffold protein carrying a second [4Fe-4S](2+) cluster] + N(6)-octanoyl-L-lysyl-[protein] + 2 oxidized [2Fe-2S]-[ferredoxin] + 2 S-adenosyl-L-methionine + 4 H(+) = [[Fe-S] cluster scaffold protein] + N(6)-[(R)-dihydrolipoyl]-L-lysyl-[protein] + 4 Fe(3+) + 2 hydrogen sulfide + 2 5'-deoxyadenosine + 2 L-methionine + 2 reduced [2Fe-2S]-[ferredoxin]. The protein operates within protein modification; protein lipoylation via endogenous pathway; protein N(6)-(lipoyl)lysine from octanoyl-[acyl-carrier-protein]: step 2/2. Catalyzes the radical-mediated insertion of two sulfur atoms into the C-6 and C-8 positions of the octanoyl moiety bound to the lipoyl domains of lipoate-dependent enzymes, thereby converting the octanoylated domains into lipoylated derivatives. This Methylorubrum extorquens (strain CM4 / NCIMB 13688) (Methylobacterium extorquens) protein is Lipoyl synthase.